The following is a 513-amino-acid chain: ATP synthase subunit alpha (513 aa).

169 to 176 is an ATP binding site; sequence GDRQTGKT.

It belongs to the ATPase alpha/beta chains family. In terms of assembly, F-type ATPases have 2 components, CF(1) - the catalytic core - and CF(0) - the membrane proton channel. CF(1) has five subunits: alpha(3), beta(3), gamma(1), delta(1), epsilon(1). CF(0) has three main subunits: a(1), b(2) and c(9-12). The alpha and beta chains form an alternating ring which encloses part of the gamma chain. CF(1) is attached to CF(0) by a central stalk formed by the gamma and epsilon chains, while a peripheral stalk is formed by the delta and b chains.

The protein localises to the cell inner membrane. It catalyses the reaction ATP + H2O + 4 H(+)(in) = ADP + phosphate + 5 H(+)(out). Its function is as follows. Produces ATP from ADP in the presence of a proton gradient across the membrane. The alpha chain is a regulatory subunit. This is ATP synthase subunit alpha from Salmonella arizonae (strain ATCC BAA-731 / CDC346-86 / RSK2980).